A 934-amino-acid chain; its full sequence is Aconitate hydratase A (934 aa).

Residues Glu398 to Asn454 form a disordered region. Positions Leu404–Glu420 are enriched in basic and acidic residues. The span at Ser427–Ser445 shows a compositional bias: low complexity. The [4Fe-4S] cluster site is built by Cys473, Cys539, and Cys542.

This sequence belongs to the aconitase/IPM isomerase family. Monomer. The cofactor is [4Fe-4S] cluster.

It carries out the reaction citrate = D-threo-isocitrate. It catalyses the reaction (2S,3R)-3-hydroxybutane-1,2,3-tricarboxylate = 2-methyl-cis-aconitate + H2O. It functions in the pathway carbohydrate metabolism; tricarboxylic acid cycle; isocitrate from oxaloacetate: step 2/2. The protein operates within organic acid metabolism; propanoate degradation. Its function is as follows. Involved in the catabolism of short chain fatty acids (SCFA) via the tricarboxylic acid (TCA)(acetyl degradation route) and probably via the 2-methylcitrate cycle I (propionate degradation route). Catalyzes the reversible isomerization of citrate to isocitrate via cis-aconitate. Could catalyze the hydration of 2-methyl-cis-aconitate to yield (2R,3S)-2-methylisocitrate. The apo form of AcnA functions as a RNA-binding regulatory protein. The sequence is that of Aconitate hydratase A (acn) from Corynebacterium diphtheriae (strain ATCC 700971 / NCTC 13129 / Biotype gravis).